The primary structure comprises 488 residues: MRAEIGPDFRPHYTFGDAYPASERAHVNWELSAPVWHTAQMGSTTHREVAKLDRVPLPVEAARVAATGWQVTRTAVRFIGRLPRKGPWQQKVIKELPQTFADLGPTYVKFGQIIASSPGAFGESLSREFRGLLDRVPPAKTDEVHKLFVEELGDEPARLFASFEEEPFASASIAQVHYATLRSGEEVVVKIQRPGIRRRVAADLQILKRFAQTVELAKLGRRLSAQDVVADFADNLAEELDFRLEAQSMEAWVSHLHASPLGKNIRVPQVHWDFTTERVLTMERVHGIRIDNAAAIRKAGFDGVELVKALLFSVFEGGLRHGLFHGDLHAGNLYVDEAGRIVFFDFGIMGRIDPRTRWLLRELVYALLVKKDHAAAGKIVVLMGAVGTMKPETQAAKDLERFATPLTMQSLGDMSYADIGRQLSALADAYDVKLPRELVLIGKQFLYVERYMKLLAPRWQMMSDPQLTGYFANFMVEVSREHQSDIEV.

The protein belongs to the protein kinase superfamily. ADCK protein kinase family.

This is an uncharacterized protein from Mycobacterium tuberculosis (strain CDC 1551 / Oshkosh).